The sequence spans 401 residues: MTALSQSEPSLSASSDSSTDALVQKAKRHLLQNYKQPPFVLARGQGARVWDMDGREYLDLIGGIATCALGHCHPEVVAAAKAQLDSLWHVSNVFYSQPQIDLAAQLTEWSGLSRAFFCNSGAEANEALLKLTRKVMKDRGTPERFEVISFDSSFHGRTLATVTATGQAKYQKGFEPLPAGFTHVPYGDLEAVRKAVGPATAAILVEPIQGEGGVRMAPLGFLVGLRALCDEHGLLLLVDEVQTGMGRTGKPFGFMHEGIVPDGISVAKALGNGLPIGAMLCKEELGASLTPGTHGSTFGGNPVAAAAANAVVRILRRPGFLDEVQEKGAYLLARARELQGRLPAGRIQAVRGQGLLVGVQLDHKVAPVIAQVHEEGLLVNPAGDRTMLFAPPFIVTVRELD.

Pyridoxal 5'-phosphate-binding positions include glycine 121 to alanine 122 and phenylalanine 154. Arginine 157 serves as a coordination point for N(2)-acetyl-L-ornithine. A pyridoxal 5'-phosphate-binding site is contributed by aspartate 239–glutamine 242. Lysine 268 is modified (N6-(pyridoxal phosphate)lysine). Residue serine 296 coordinates N(2)-acetyl-L-ornithine. Threonine 297 provides a ligand contact to pyridoxal 5'-phosphate.

Belongs to the class-III pyridoxal-phosphate-dependent aminotransferase family. ArgD subfamily. As to quaternary structure, homodimer. It depends on pyridoxal 5'-phosphate as a cofactor.

It localises to the cytoplasm. The enzyme catalyses N(2)-acetyl-L-ornithine + 2-oxoglutarate = N-acetyl-L-glutamate 5-semialdehyde + L-glutamate. It functions in the pathway amino-acid biosynthesis; L-arginine biosynthesis; N(2)-acetyl-L-ornithine from L-glutamate: step 4/4. This chain is Acetylornithine aminotransferase, found in Myxococcus xanthus.